Reading from the N-terminus, the 429-residue chain is Antho-RFamide neuropeptides type 2 (429 aa).

Residues 1 to 22 (MTTVSYVTILLTVLVQVLTSDA) form the signal peptide. A propeptide spanning residues 23–233 (KATNNKRELS…EFQGRFGRED (211 aa)) is cleaved from the precursor. Residues 230-371 (GREDQGRFGR…EDIAKEDQGR (142 aa)) are compositionally biased toward basic and acidic residues. Residues 230–429 (GREDQGRFGR…KSDDALAKIS (200 aa)) form a disordered region. The residue at position 234 (Gln234) is a Pyrrolidone carboxylic acid. At Phe237 the chain carries Phenylalanine amide. Residues 239-241 (RED) constitute a propeptide that is removed on maturation. Gln242 bears the Pyrrolidone carboxylic acid mark. Phe245 is subject to Phenylalanine amide. A propeptide spanning residues 247–249 (RED) is cleaved from the precursor. The residue at position 250 (Gln250) is a Pyrrolidone carboxylic acid. Phe253 is modified (phenylalanine amide). The propeptide occupies 255–257 (RED). The residue at position 258 (Gln258) is a Pyrrolidone carboxylic acid. At Phe261 the chain carries Phenylalanine amide. Positions 263–265 (RED) are excised as a propeptide. A Pyrrolidone carboxylic acid modification is found at Gln266. Position 269 is a phenylalanine amide (Phe269). The propeptide occupies 271 to 273 (RED). Gln274 carries the pyrrolidone carboxylic acid modification. At Phe277 the chain carries Phenylalanine amide. The propeptide occupies 279–289 (RELQGRFGRED). Gln290 is modified (pyrrolidone carboxylic acid). Phe293 carries the phenylalanine amide modification. A propeptide spanning residues 295–297 (RED) is cleaved from the precursor. Gln298 carries the post-translational modification Pyrrolidone carboxylic acid. Phe301 is subject to Phenylalanine amide. Residues 303–305 (RED) constitute a propeptide that is removed on maturation. At Gln306 the chain carries Pyrrolidone carboxylic acid. Phe309 carries the post-translational modification Phenylalanine amide. A propeptide spanning residues 311–321 (RELQGRFGRED) is cleaved from the precursor. Pyrrolidone carboxylic acid is present on Gln322. Phenylalanine amide is present on Phe325. The propeptide occupies 327-329 (RED). Pyrrolidone carboxylic acid is present on Gln330. A Phenylalanine amide modification is found at Phe333. The propeptide occupies 335–342 (REDLAKED). Gln343 carries the pyrrolidone carboxylic acid modification. At Phe346 the chain carries Phenylalanine amide. Positions 348-355 (REDLAKED) are excised as a propeptide. Gln356 bears the Pyrrolidone carboxylic acid mark. Residue Phe359 is modified to Phenylalanine amide. Positions 361–368 (REDIAKED) are excised as a propeptide. Gln369 bears the Pyrrolidone carboxylic acid mark. The residue at position 372 (Phe372) is a Phenylalanine amide. Residues 374–429 (RNAAAAAKKRTIDVIDIESDPKPQTRFRDGKDMQEKRKVEKKDKIEKSDDALAKIS) constitute a propeptide that is removed on maturation. The span at 392-429 (SDPKPQTRFRDGKDMQEKRKVEKKDKIEKSDDALAKIS) shows a compositional bias: basic and acidic residues.

The protein belongs to the FARP (FMRFamide related peptide) family.

Its subcellular location is the secreted. In terms of biological role, not known but it could act as a transmitter at neuromuscular synapses. The polypeptide is Antho-RFamide neuropeptides type 2 (Anthopleura elegantissima (Green aggregating anemone)).